We begin with the raw amino-acid sequence, 272 residues long: MMEWIDENSSLFVPPVCNKLMYGEGQLKIMFVGGPNTRKDYHLEEGEELFFQVKGDMCLKVLEKGKPKDIIIKEGEMFLLPSRFNHSPQRFENTVGLVIERERLPEEIDGLRYFCEDGVTVLWEKFFHCTDLTQIAPVIKEFFESEEHKTGKPSKESSCSINVDTETELMEPFPLKQWLKDNKDSYRSGSMAIFEKGEFKVHAHGSGEQEGHSQGEMWFWQLEGKATVNVDEITRELNKNDVLMITAGSDFRVKREEGSVGLSITVDSLANK.

Positions 1–154 (MMEWIDENSS…SEEHKTGKPS (154 aa)) are domain A (catalytic). Arg-38 lines the O2 pocket. Residues His-42, Glu-48, and His-86 each contribute to the Fe cation site. Glu-48 is a substrate binding site. Residues Arg-90 and Glu-100 each contribute to the substrate site. The linker stretch occupies residues 155–169 (KESSCSINVDTETEL). The domain B stretch occupies residues 170–272 (MEPFPLKQWL…SITVDSLANK (103 aa)).

Belongs to the 3-HAO family. The cofactor is Fe(2+).

The protein resides in the cytoplasm. It carries out the reaction 3-hydroxyanthranilate + O2 = (2Z,4Z)-2-amino-3-carboxymuconate 6-semialdehyde. Its pathway is cofactor biosynthesis; NAD(+) biosynthesis; quinolinate from L-kynurenine: step 3/3. Catalyzes the oxidative ring opening of 3-hydroxyanthranilate to 2-amino-3-carboxymuconate semialdehyde, which spontaneously cyclizes to quinolinate. The polypeptide is 3-hydroxyanthranilate 3,4-dioxygenase (Nematostella vectensis (Starlet sea anemone)).